Here is a 147-residue protein sequence, read N- to C-terminus: Peptide methionine sulfoxide reductase MsrB (147 aa).

Residues 1-11 show a composition bias toward basic and acidic residues; the sequence is MPKIVKKEPKF. The disordered stretch occupies residues 1–25; it reads MPKIVKKEPKFVEQSGKKVTKSDEQ. Residues 23–145 enclose the MsrB domain; that stretch reads DEQWREQLSD…NSVSLIFNKS (123 aa). Residues Cys62, Cys65, Cys111, and Cys114 each coordinate Zn(2+). Cys134 functions as the Nucleophile in the catalytic mechanism.

This sequence belongs to the MsrB Met sulfoxide reductase family. Zn(2+) is required as a cofactor.

It catalyses the reaction L-methionyl-[protein] + [thioredoxin]-disulfide + H2O = L-methionyl-(R)-S-oxide-[protein] + [thioredoxin]-dithiol. This Vibrio parahaemolyticus serotype O3:K6 (strain RIMD 2210633) protein is Peptide methionine sulfoxide reductase MsrB.